The primary structure comprises 289 residues: E3 ubiquitin-protein ligase MARCHF8 (289 aa).

A disordered region spans residues 1 to 68; sequence MNMPLHQISA…SAPVSSFPRT (68 aa). Residues 25–39 are compositionally biased toward basic and acidic residues; that stretch reads KTKEKEREEQNEKTL. Positions 50–64 are enriched in low complexity; the sequence is SKAGGSSVASAPVSS. The segment at 70–131 adopts an RING-CH-type zinc-finger fold; it reads VTPSNQDICR…ELCKYEFIME (62 aa). 8 residues coordinate Zn(2+): C78, C81, C95, C97, H105, C108, C121, and C124. Helical transmembrane passes span 155-175 and 195-215; these read CSVTFHVIAITCVVWSLYVLI and FWTKLVVVAIGFTGGLLFMYV.

In terms of assembly, interacts with CD86.

Its subcellular location is the golgi apparatus membrane. It localises to the endoplasmic reticulum membrane. It is found in the cytoplasmic vesicle membrane. The protein resides in the lysosome membrane. The protein localises to the early endosome membrane. The enzyme catalyses S-ubiquitinyl-[E2 ubiquitin-conjugating enzyme]-L-cysteine + [acceptor protein]-L-lysine = [E2 ubiquitin-conjugating enzyme]-L-cysteine + N(6)-ubiquitinyl-[acceptor protein]-L-lysine.. It functions in the pathway protein modification; protein ubiquitination. Its function is as follows. E3 ubiquitin-protein ligase that plays several important roles in innate immunity and adaptive immunity. Mediates ubiquitination of CD86 and MHC class II proteins, such as HLA-DR alpha and beta, and promotes their subsequent endocytosis and sorting to lysosomes via multivesicular bodies. Possesses a very broad antiviral activity by specifically inactivating different viral fusion proteins. Targets and ubiquitinates cytoplasmic lysine residues of viral envelope glycoproteins with single transmembrane domains leading to their lysosomal degradation. Mediates the regulation of constitutive ubiquitination and trafficking of the viral restriction factor BST2 within the endocytic pathway. Plays a role in maintenance of immune tolerance to self by promoting the turnover and proteasomal degradation of PD-L1/CD274 via ubiquitination. Catalyzes the 'Lys-63'-linked polyubiquitylation of cGAS thereby inhibiting its DNA binding ability and impairing its antiviral innate immunity. Negatively regulates IL7-mediated T-cell homeostasis by mediating 'Lys-27'-linked polyubiquitination of IL7R, leading to its lysosomal degradation. The sequence is that of E3 ubiquitin-protein ligase MARCHF8 (MARCHF8) from Bos taurus (Bovine).